We begin with the raw amino-acid sequence, 443 residues long: Packaging protein 1 (443 aa).

The tract at residues 1–75 (MSGAADGTVP…PEAAQPPPSR (75 aa)) is disordered. The segment covering 13 to 56 (EDTHQEDSGERECEQRPVHSGREATGESDPALERPDHGERHGPE) has biased composition (basic and acidic residues). Position 169–176 (169–176 (GPTGSGKS)) interacts with ATP. The tract at residues 433-443 (VSYANKRKWYD) is DNA-binding.

It belongs to the adenoviridae packaging protein 1 family. Homodimer. Part of a genome packaging complex composed of packaging proteins 1, 2 and 3; this complex specifically binds to the packaging sequence on the left end of viral genomic DNA and performs packaging of the viral genome. Interacts with protein 33K.

Its subcellular location is the virion. It is found in the host nucleus. The protein resides in the host nucleoplasm. The protein localises to the host nucleolus. Its function is as follows. Component of the packaging machinery which encapsidates the viral DNA into preformed capsids and transcriptional activator of the viral major late promoter (MLP). Binds, along with packaging proteins 2 and 3, to the specific packaging sequence on the left end of viral genomic DNA and displays ATPase activity thereby providing the power stroke of the packaging machinery. The activity of packaging protein IVa2 is stimulated by protein 33K which acts as a terminase. May be the protein that pumps DNA into the capsid powered by ATP hydrolysis. Specifically binds to the 5'-CG-3' nucleotides of the repeats making up the packaging sequence. Component of the DEF-A and DEF-B transcription factors that bind downstream elements of the major late promoter (MLP), and stimulate transcription from the MLP after initiation of viral DNA replication. DEF-A is a heterodimer packaging proteins 1 and 2 and DEF-B is a homodimer of packaging protein 1. This Pantherophis guttatus (Corn snake) protein is Packaging protein 1.